A 660-amino-acid polypeptide reads, in one-letter code: Pentatricopeptide repeat-containing protein At4g20090 (660 aa).

15 PPR repeats span residues 76-110, 111-141, 147-181, 186-220, 221-255, 256-290, 291-325, 326-360, 361-395, 396-430, 431-465, 466-500, 501-535, 539-573, and 574-609; these read GDST…NRVI, IERS…MVDE, SVKS…NMNM, NGLS…KCLP, DGYT…GCSP, SPVI…GCVP, NEVT…KCIP, NDVT…GYHL, NQHI…GCKP, NIVV…GCLP, NAYT…GCSR, NKFC…GIKP, DTVA…EEPK, DVVT…GCDP, and DVIT…LLKR.

Belongs to the PPR family. P subfamily.

Functionally, may play a role in embryogenesis. The polypeptide is Pentatricopeptide repeat-containing protein At4g20090 (EMB1025) (Arabidopsis thaliana (Mouse-ear cress)).